The following is a 181-amino-acid chain: MIELEKHYYEKVFGQLKAHFNFKSPSQVPKITKVVVNMTAGNQSSNAKAIEAVLEDLAKITGQKAYKTVAKKSLATWKLRQGMPMGGKVTLRRQQMWNFLAKVLHIAIPRVRDFRGLSPKSFDGNGNFALGFKESIVFPEITFDKISKIRGLDVIIVTSAKNDQEGFKLLELLGFPFAKKV.

Belongs to the universal ribosomal protein uL5 family. As to quaternary structure, part of the 50S ribosomal subunit; part of the 5S rRNA/L5/L18/L25 subcomplex. Contacts the 5S rRNA and the P site tRNA. Forms a bridge to the 30S subunit in the 70S ribosome.

This is one of the proteins that bind and probably mediate the attachment of the 5S RNA into the large ribosomal subunit, where it forms part of the central protuberance. In the 70S ribosome it contacts protein S13 of the 30S subunit (bridge B1b), connecting the 2 subunits; this bridge is implicated in subunit movement. Contacts the P site tRNA; the 5S rRNA and some of its associated proteins might help stabilize positioning of ribosome-bound tRNAs. This chain is Large ribosomal subunit protein uL5, found in Mesomycoplasma hyopneumoniae (strain 232) (Mycoplasma hyopneumoniae).